A 372-amino-acid polypeptide reads, in one-letter code: Queuine tRNA-ribosyltransferase (372 aa).

Asp-92 serves as the catalytic Proton acceptor. Substrate contacts are provided by residues Asp-92–Tyr-96, Asp-146, Gln-188, and Gly-215. The tract at residues Gly-246 to Glu-252 is RNA binding. The active-site Nucleophile is the Asp-265. The segment at Thr-270–Arg-274 is RNA binding; important for wobble base 34 recognition. Zn(2+)-binding residues include Cys-303, Cys-305, Cys-308, and His-334.

Belongs to the queuine tRNA-ribosyltransferase family. As to quaternary structure, homodimer. Within each dimer, one monomer is responsible for RNA recognition and catalysis, while the other monomer binds to the replacement base PreQ1. The cofactor is Zn(2+).

It carries out the reaction 7-aminomethyl-7-carbaguanine + guanosine(34) in tRNA = 7-aminomethyl-7-carbaguanosine(34) in tRNA + guanine. It participates in tRNA modification; tRNA-queuosine biosynthesis. In terms of biological role, catalyzes the base-exchange of a guanine (G) residue with the queuine precursor 7-aminomethyl-7-deazaguanine (PreQ1) at position 34 (anticodon wobble position) in tRNAs with GU(N) anticodons (tRNA-Asp, -Asn, -His and -Tyr). Catalysis occurs through a double-displacement mechanism. The nucleophile active site attacks the C1' of nucleotide 34 to detach the guanine base from the RNA, forming a covalent enzyme-RNA intermediate. The proton acceptor active site deprotonates the incoming PreQ1, allowing a nucleophilic attack on the C1' of the ribose to form the product. After dissociation, two additional enzymatic reactions on the tRNA convert PreQ1 to queuine (Q), resulting in the hypermodified nucleoside queuosine (7-(((4,5-cis-dihydroxy-2-cyclopenten-1-yl)amino)methyl)-7-deazaguanosine). This Prochlorococcus marinus (strain MIT 9515) protein is Queuine tRNA-ribosyltransferase.